A 274-amino-acid chain; its full sequence is CTO1 family protein C17G9.12c (274 aa).

This sequence belongs to the CTO1 family.

It is found in the cytoplasm. The protein localises to the nucleus. In Schizosaccharomyces pombe (strain 972 / ATCC 24843) (Fission yeast), this protein is CTO1 family protein C17G9.12c.